The chain runs to 199 residues: Recombination protein RecR (199 aa).

The C4-type zinc-finger motif lies at 56–71 (CTVCFNVTEQETCNIC). Residues 79–174 (SVICVVEESK…TVTRLASGLP (96 aa)) form the Toprim domain.

The protein belongs to the RecR family.

Functionally, may play a role in DNA repair. It seems to be involved in an RecBC-independent recombinational process of DNA repair. It may act with RecF and RecO. The chain is Recombination protein RecR from Paenarthrobacter aurescens (strain TC1).